Consider the following 499-residue polypeptide: Ammonium transporter MEP2 (499 aa).

Over 1-31 the chain is Extracellular; it reads MSYNFTGTPTGEGTGGNSLTTDLNTQFDLAN. N-linked (GlcNAc...) asparagine glycosylation is present at Asn-4. The chain crosses the membrane as a helical span at residues 32–52; that stretch reads MGWIGVASAGVWIMVPGIGLL. Over 53–62 the chain is Cytoplasmic; it reads YSGLSRKKHA. A helical transmembrane segment spans residues 63–83; it reads LSLLWASMMASAVCIFQWFFW. At 84–122 the chain is on the extracellular side; sequence GYSLAFSHNTRGNGFIGTLEFFGFRNVLGAPSSVSSLPD. The helical transmembrane segment at 123 to 143 threads the bilayer; the sequence is ILFAVYQGMFAAVTGALMLGG. The Cytoplasmic portion of the chain corresponds to 144 to 152; that stretch reads ACERARLFP. A helical membrane pass occupies residues 153–173; sequence MMVFLFLWMTIVYCPIACWVW. Residues 174–187 are Extracellular-facing; the sequence is NAEGWLVKLGSLDY. Residues 188–208 traverse the membrane as a helical segment; sequence AGGLCVHLTSGHGGLVYALIL. The Cytoplasmic segment spans residues 209-230; that stretch reads GKRNDPVTRKGMPKYKPHSVTS. Residues 231-251 form a helical membrane-spanning segment; the sequence is VVLGTVFLWFGWMFFNGGSAG. At 252–257 the chain is on the extracellular side; it reads NATIRA. A helical transmembrane segment spans residues 258-278; the sequence is WYSIMSTNLAAACGGLTWMVI. Residues 279-289 lie on the Cytoplasmic side of the membrane; sequence DYFRCGRKWTT. Residues 290-312 form a helical membrane-spanning segment; sequence VGLCSGIIAGLVGITPAAGFVPI. Topologically, residues 313-315 are extracellular; the sequence is WSA. The chain crosses the membrane as a helical span at residues 316-338; the sequence is VVIGVVTGAGCNLAVDLKSLLRI. Residues 339-346 lie on the Cytoplasmic side of the membrane; that stretch reads DDGLDCYS. Residues 347–367 traverse the membrane as a helical segment; it reads IHGVGGCIGSVLTGIFAADYV. Residues 368-393 are Extracellular-facing; the sequence is NATAGSYISPIDGGWINHHYKQVGYQ. The chain crosses the membrane as a helical span at residues 394–414; that stretch reads LAGICAALAWTVTVTSILLLT. Over 415 to 499 the chain is Cytoplasmic; it reads MNAIPFLKLR…SSTKNTDHIV (85 aa). Residues 428-441 are enhancer domain; it reads DEEELGTDAAQIGE. The tract at residues 442–449 is linker domain; sequence FTYEESTA. An autoinhibitory domain region spans residues 450–485; the sequence is YIPEPIRSKTSAQMPPPHENIDDKIVGNTDAEKNST. The disordered stretch occupies residues 455 to 499; it reads IRSKTSAQMPPPHENIDDKIVGNTDAEKNSTPSDASSTKNTDHIV. Ser-457 carries the post-translational modification Phosphoserine. The span at 468 to 482 shows a compositional bias: basic and acidic residues; that stretch reads ENIDDKIVGNTDAEK. A compositionally biased stretch (polar residues) spans 483 to 493; sequence NSTPSDASSTK.

This sequence belongs to the ammonia transporter channel (TC 1.A.11.2) family. Phosphorylated at Ser-457 by the TORC1 effector kinase NPR1 under nitrogen-limiting conditions which causes a conformational change in the C-terminal region (CTR) to form an open active conformation. Supplementation of nitrogen source leads to inactivation and instant Ser-457 dephosphorylation via plasma membrane PSR1 and PSR2 redundant phosphatases. Post-translationally, the residue Asn-4 of the protein's N-terminal tail is the only site that is glycosylated.

The protein resides in the cell membrane. In terms of biological role, transporter for ammonium (both charged and uncharged NH3 and NH4) to use as a nitrogen source. The affinity of MEP2 is about twenty times higher than that of MEP1. MEP3 has the lowest affinity. Under ammonium limitation acts as an ammonium sensor, generating a signal that leads to pseudohyphal (filamentous) growth. This is Ammonium transporter MEP2 from Saccharomyces cerevisiae (strain ATCC 204508 / S288c) (Baker's yeast).